The chain runs to 38 residues: ATP synthase subunit O, mitochondrial (38 aa).

Belongs to the ATPase delta chain family. As to quaternary structure, F-type ATPases have 2 components, CF(1) - the catalytic core - and CF(0) - the membrane proton channel. CF(1) has five subunits: alpha(3), beta(3), gamma(1), delta(1), epsilon(1). CF(0) has three main subunits: a, b and c.

It localises to the mitochondrion. It is found in the mitochondrion inner membrane. In terms of biological role, mitochondrial membrane ATP synthase (F(1)F(0) ATP synthase or Complex V) produces ATP from ADP in the presence of a proton gradient across the membrane which is generated by electron transport complexes of the respiratory chain. F-type ATPases consist of two structural domains, F(1) - containing the extramembraneous catalytic core and F(0) - containing the membrane proton channel, linked together by a central stalk and a peripheral stalk. During catalysis, ATP synthesis in the catalytic domain of F(1) is coupled via a rotary mechanism of the central stalk subunits to proton translocation. Part of the complex F(0) domain and the peripheric stalk, which acts as a stator to hold the catalytic alpha(3)beta(3) subcomplex and subunit a/ATP6 static relative to the rotary elements. The protein is ATP synthase subunit O, mitochondrial of Pisum sativum (Garden pea).